We begin with the raw amino-acid sequence, 154 residues long: Endoribonuclease YbeY (154 aa).

Zn(2+)-binding residues include H114, H118, and H124.

Belongs to the endoribonuclease YbeY family. Requires Zn(2+) as cofactor.

It is found in the cytoplasm. Its function is as follows. Single strand-specific metallo-endoribonuclease involved in late-stage 70S ribosome quality control and in maturation of the 3' terminus of the 16S rRNA. The protein is Endoribonuclease YbeY of Haemophilus influenzae (strain PittEE).